Reading from the N-terminus, the 796-residue chain is Protein translocase subunit SecA 2 (796 aa).

Residues Q84, 102 to 106, and D496 each bind ATP; that span reads GEGKT.

This sequence belongs to the SecA family. In terms of assembly, monomer and homodimer (Potential). Part of the accessory SecA2/SecY2 protein translocation apparatus required to export cell wall protein SraP.

The protein localises to the cell membrane. It is found in the cytoplasm. The catalysed reaction is ATP + H2O + cellular proteinSide 1 = ADP + phosphate + cellular proteinSide 2.. Functionally, part of the accessory SecA2/SecY2 system specifically required to export SraP, a serine-rich repeat cell wall protein encoded upstream in the same operon. The chain is Protein translocase subunit SecA 2 from Staphylococcus aureus (strain NCTC 8325 / PS 47).